Here is an 875-residue protein sequence, read N- to C-terminus: Phosphatidylinositol 3-kinase VPS34 (875 aa).

The 175-residue stretch at 14–188 (LDVPLKVKIK…WLDEITISKL (175 aa)) folds into the C2 PI3K-type domain. The 234-residue stretch at 293–526 (LDKQVKPDIK…SSFWSRLDKK (234 aa)) folds into the PIK helical domain. The region spanning 593 to 859 (CPETSKVFKS…LINDSVNALL (267 aa)) is the PI3K/PI4K catalytic domain. The tract at residues 599-605 (VFKSSLS) is G-loop. The interval 728–736 (GVGDRHLDN) is catalytic loop. The tract at residues 747 to 768 (HADFGYILGQDPKPFPPLMKLP) is activation loop.

This sequence belongs to the PI3/PI4-kinase family. Component of the autophagy-specific VPS34 PI3-kinase complex I composed of VPS15, VPS30, VPS34, ATG14 and ATG38, and of the VPS34 PI3-kinase complex II composed of VPS15, VPS30, VPS34 and VPS38. Interacts directly with ATG38. Interacts directly with VPS34. Post-translationally, autophosphorylated. Might also be phosphorylated by VPS15.

The protein localises to the golgi apparatus. The protein resides in the trans-Golgi network membrane. Its subcellular location is the endosome membrane. It catalyses the reaction a 1,2-diacyl-sn-glycero-3-phospho-(1D-myo-inositol) + ATP = a 1,2-diacyl-sn-glycero-3-phospho-(1D-myo-inositol-3-phosphate) + ADP + H(+). Phosphatidylinositol 3-kinase activity is directly dependent on VPS15 protein kinase activity. Phosphatidylinositol 3-kinase required for cytoplasm to vacuole transport (Cvt) and autophagy as a part of the autophagy-specific VPS34 PI3-kinase complex I. This complex is essential to recruit the ATG8-phosphatidylinositol conjugate and the ATG12-ATG5 conjugate to the pre-autophagosomal structure. Also involved in endosome-to-Golgi retrograde transport as part of the VPS34 PI3-kinase complex II. This second complex is required for the endosome-to-Golgi retrieval of PEP1 and KEX2, and the recruitment of VPS5 and VPS7, two components of the retromer complex, to endosomal membranes (probably through the synthesis of a specific pool of phosphatidylinositol 3-phosphate recruiting the retromer to the endosomes). Its activation by VPS15 may lead to the phosphorylation of phosphatidylinositol in the sorting compartment membrane. Finally, it might also be involved in ethanol tolerance and cell wall integrity. The chain is Phosphatidylinositol 3-kinase VPS34 (VPS34) from Saccharomyces cerevisiae (strain ATCC 204508 / S288c) (Baker's yeast).